The sequence spans 369 residues: Actin-related protein T3 (369 aa).

The protein belongs to the actin family. As to quaternary structure, interacts with PFN3. As to expression, testis specific (at protein level). Expressed specifically in haploid germ cells.

It localises to the cytoplasm. The protein resides in the cytoskeleton. It is found in the nucleus. This Mus musculus (Mouse) protein is Actin-related protein T3 (Actrt3).